A 475-amino-acid polypeptide reads, in one-letter code: Ribulose bisphosphate carboxylase large chain (475 aa).

A propeptide spanning residues 1–2 (MS) is cleaved from the precursor. The residue at position 3 (proline 3) is an N-acetylproline. Lysine 14 bears the N6,N6,N6-trimethyllysine mark. Positions 123 and 173 each coordinate substrate. Lysine 175 serves as the catalytic Proton acceptor. Lysine 177 lines the substrate pocket. Mg(2+) contacts are provided by lysine 201, aspartate 203, and glutamate 204. Lysine 201 carries the post-translational modification N6-carboxylysine. Catalysis depends on histidine 294, which acts as the Proton acceptor. Positions 295, 327, and 379 each coordinate substrate.

Belongs to the RuBisCO large chain family. Type I subfamily. In terms of assembly, heterohexadecamer of 8 large chains and 8 small chains; disulfide-linked. The disulfide link is formed within the large subunit homodimers. Mg(2+) serves as cofactor. In terms of processing, the disulfide bond which can form in the large chain dimeric partners within the hexadecamer appears to be associated with oxidative stress and protein turnover.

The protein localises to the plastid. The protein resides in the chloroplast. It catalyses the reaction 2 (2R)-3-phosphoglycerate + 2 H(+) = D-ribulose 1,5-bisphosphate + CO2 + H2O. The catalysed reaction is D-ribulose 1,5-bisphosphate + O2 = 2-phosphoglycolate + (2R)-3-phosphoglycerate + 2 H(+). Its function is as follows. RuBisCO catalyzes two reactions: the carboxylation of D-ribulose 1,5-bisphosphate, the primary event in carbon dioxide fixation, as well as the oxidative fragmentation of the pentose substrate in the photorespiration process. Both reactions occur simultaneously and in competition at the same active site. The polypeptide is Ribulose bisphosphate carboxylase large chain (Piper cenocladum (Ant piper)).